A 583-amino-acid polypeptide reads, in one-letter code: Putative amidase C869.01 (583 aa).

The N-terminal stretch at 1-19 (MKLQLLFLTLAQLAKHGLA) is a signal peptide. Catalysis depends on charge relay system residues Lys-141 and Ser-222. Ser-246 acts as the Acyl-ester intermediate in catalysis.

This sequence belongs to the amidase family.

The protein localises to the cytoplasm. The enzyme catalyses a monocarboxylic acid amide + H2O = a monocarboxylate + NH4(+). The protein is Putative amidase C869.01 of Schizosaccharomyces pombe (strain 972 / ATCC 24843) (Fission yeast).